The chain runs to 425 residues: Enolase (425 aa).

Gln162 serves as a coordination point for (2R)-2-phosphoglycerate. Glu204 (proton donor) is an active-site residue. Mg(2+) is bound by residues Asp241, Glu282, and Asp309. (2R)-2-phosphoglycerate is bound by residues Lys334, Arg363, Ser364, and Lys385. The Proton acceptor role is filled by Lys334.

It belongs to the enolase family. It depends on Mg(2+) as a cofactor.

The protein localises to the cytoplasm. It localises to the secreted. The protein resides in the cell surface. It catalyses the reaction (2R)-2-phosphoglycerate = phosphoenolpyruvate + H2O. It functions in the pathway carbohydrate degradation; glycolysis; pyruvate from D-glyceraldehyde 3-phosphate: step 4/5. Its function is as follows. Catalyzes the reversible conversion of 2-phosphoglycerate (2-PG) into phosphoenolpyruvate (PEP). It is essential for the degradation of carbohydrates via glycolysis. This Corynebacterium aurimucosum (strain ATCC 700975 / DSM 44827 / CIP 107346 / CN-1) (Corynebacterium nigricans) protein is Enolase.